The following is a 152-amino-acid chain: Complexin (152 aa).

The segment at 1–119 (MAAFIAKQMV…EEEDDDEFAK (119 aa)) is disordered. Acidic residues predominate over residues 23–39 (DEGEKEGNENAEEEAAA). 2 stretches are compositionally biased toward basic and acidic residues: residues 41 to 82 (EEAR…VKEE) and 90 to 104 (DEGRVGRKKKTKEEL). Residues 59–75 (EEEREEMRQTIRDKYGL) form an interaction with the SNARE complex region. Cys149 is subject to Cysteine methyl ester. Cys149 carries the S-farnesyl cysteine lipid modification. A propeptide spans 150-152 (SLQ) (removed in mature form).

This sequence belongs to the complexin/synaphin family. As to quaternary structure, binds to the SNARE core complex containing SNAP25, synaptobrevin and syntaxin-1.

It is found in the membrane. The protein resides in the cytoplasm. The protein localises to the cytosol. Functionally, positively regulates a late step in synaptic vesicle exocytosis. The chain is Complexin (cpx) from Doryteuthis pealeii (Longfin inshore squid).